A 112-amino-acid polypeptide reads, in one-letter code: Putative pterin-4-alpha-carbinolamine dehydratase (112 aa).

This sequence belongs to the pterin-4-alpha-carbinolamine dehydratase family.

The catalysed reaction is (4aS,6R)-4a-hydroxy-L-erythro-5,6,7,8-tetrahydrobiopterin = (6R)-L-erythro-6,7-dihydrobiopterin + H2O. In Dechloromonas aromatica (strain RCB), this protein is Putative pterin-4-alpha-carbinolamine dehydratase.